A 462-amino-acid chain; its full sequence is L-seryl-tRNA(Sec) selenium transferase (462 aa).

Lysine 295 carries the post-translational modification N6-(pyridoxal phosphate)lysine.

Belongs to the SelA family. In terms of assembly, homodecamer; pentamer of dimers. Binds only one seryl-tRNA(Sec) per dimer. The cofactor is pyridoxal 5'-phosphate.

Its subcellular location is the cytoplasm. It catalyses the reaction L-seryl-tRNA(Sec) + selenophosphate + H(+) = L-selenocysteinyl-tRNA(Sec) + phosphate. It functions in the pathway aminoacyl-tRNA biosynthesis; selenocysteinyl-tRNA(Sec) biosynthesis; selenocysteinyl-tRNA(Sec) from L-seryl-tRNA(Sec) (bacterial route): step 1/1. In terms of biological role, converts seryl-tRNA(Sec) to selenocysteinyl-tRNA(Sec) required for selenoprotein biosynthesis. In Klebsiella pneumoniae subsp. pneumoniae (strain ATCC 700721 / MGH 78578), this protein is L-seryl-tRNA(Sec) selenium transferase.